Here is a 128-residue protein sequence, read N- to C-terminus: Fluoride-specific ion channel FluC (128 aa).

The next 4 membrane-spanning stretches (helical) occupy residues 3–23 (FSVIFAVGIGGFFGAISRFLI), 34–54 (LFPVGTLTVNVLGSFIIGFLY), 69–89 (FITGFLGALTTFSTFSLETLL), and 100–120 (FLNILLNVILTISSTFAAIIL). Residues G75 and T78 each contribute to the Na(+) site.

The protein belongs to the fluoride channel Fluc/FEX (TC 1.A.43) family.

It is found in the cell inner membrane. The enzyme catalyses fluoride(in) = fluoride(out). Na(+) is not transported, but it plays an essential structural role and its presence is essential for fluoride channel function. Fluoride-specific ion channel. Important for reducing fluoride concentration in the cell, thus reducing its toxicity. The chain is Fluoride-specific ion channel FluC from Nitratiruptor sp. (strain SB155-2).